Consider the following 151-residue polypeptide: Deoxyuridine 5'-triphosphate nucleotidohydrolase (151 aa).

Residues 70–72 (RSG), Asn-83, and 87–89 (TID) contribute to the substrate site.

It belongs to the dUTPase family. The cofactor is Mg(2+).

It catalyses the reaction dUTP + H2O = dUMP + diphosphate + H(+). The protein operates within pyrimidine metabolism; dUMP biosynthesis; dUMP from dCTP (dUTP route): step 2/2. Its function is as follows. This enzyme is involved in nucleotide metabolism: it produces dUMP, the immediate precursor of thymidine nucleotides and it decreases the intracellular concentration of dUTP so that uracil cannot be incorporated into DNA. This is Deoxyuridine 5'-triphosphate nucleotidohydrolase from Ruegeria pomeroyi (strain ATCC 700808 / DSM 15171 / DSS-3) (Silicibacter pomeroyi).